A 381-amino-acid chain; its full sequence is Carbamoyl phosphate synthase small chain (381 aa).

The segment at 1–192 (MSKPAILALE…SGYADVSQGD (192 aa)) is CPSase. L-glutamine is bound by residues S47, G244, and G246. In terms of domain architecture, Glutamine amidotransferase type-1 spans 196-381 (HVVAYDYGMK…RFVEMMRHRR (186 aa)). The Nucleophile role is filled by C272. Residues L273, Q276, N314, G316, and F317 each contribute to the L-glutamine site. Catalysis depends on residues H356 and E358.

The protein belongs to the CarA family. In terms of assembly, composed of two chains; the small (or glutamine) chain promotes the hydrolysis of glutamine to ammonia, which is used by the large (or ammonia) chain to synthesize carbamoyl phosphate. Tetramer of heterodimers (alpha,beta)4.

It carries out the reaction hydrogencarbonate + L-glutamine + 2 ATP + H2O = carbamoyl phosphate + L-glutamate + 2 ADP + phosphate + 2 H(+). The enzyme catalyses L-glutamine + H2O = L-glutamate + NH4(+). It participates in amino-acid biosynthesis; L-arginine biosynthesis; carbamoyl phosphate from bicarbonate: step 1/1. The protein operates within pyrimidine metabolism; UMP biosynthesis via de novo pathway; (S)-dihydroorotate from bicarbonate: step 1/3. Small subunit of the glutamine-dependent carbamoyl phosphate synthetase (CPSase). CPSase catalyzes the formation of carbamoyl phosphate from the ammonia moiety of glutamine, carbonate, and phosphate donated by ATP, constituting the first step of 2 biosynthetic pathways, one leading to arginine and/or urea and the other to pyrimidine nucleotides. The small subunit (glutamine amidotransferase) binds and cleaves glutamine to supply the large subunit with the substrate ammonia. This chain is Carbamoyl phosphate synthase small chain, found in Halomonas eurihalina.